The following is a 149-amino-acid chain: Arginine repressor (149 aa).

Belongs to the ArgR family.

The protein localises to the cytoplasm. The protein operates within amino-acid biosynthesis; L-arginine biosynthesis [regulation]. Regulates arginine biosynthesis genes. This chain is Arginine repressor, found in Exiguobacterium sp. (strain ATCC BAA-1283 / AT1b).